Consider the following 273-residue polypeptide: Imidazole glycerol phosphate synthase subunit HisF (273 aa).

Residues Asp12 and Asp136 contribute to the active site.

The protein belongs to the HisA/HisF family. Heterodimer of HisH and HisF.

Its subcellular location is the cytoplasm. It catalyses the reaction 5-[(5-phospho-1-deoxy-D-ribulos-1-ylimino)methylamino]-1-(5-phospho-beta-D-ribosyl)imidazole-4-carboxamide + L-glutamine = D-erythro-1-(imidazol-4-yl)glycerol 3-phosphate + 5-amino-1-(5-phospho-beta-D-ribosyl)imidazole-4-carboxamide + L-glutamate + H(+). The protein operates within amino-acid biosynthesis; L-histidine biosynthesis; L-histidine from 5-phospho-alpha-D-ribose 1-diphosphate: step 5/9. Functionally, IGPS catalyzes the conversion of PRFAR and glutamine to IGP, AICAR and glutamate. The HisF subunit catalyzes the cyclization activity that produces IGP and AICAR from PRFAR using the ammonia provided by the HisH subunit. The sequence is that of Imidazole glycerol phosphate synthase subunit HisF from Halobacterium salinarum (strain ATCC 29341 / DSM 671 / R1).